Reading from the N-terminus, the 365-residue chain is Flagellar P-ring protein 2 (365 aa).

The signal sequence occupies residues 1-19; sequence MKKWIVMASLLLAALPAMS.

It belongs to the FlgI family. As to quaternary structure, the basal body constitutes a major portion of the flagellar organelle and consists of four rings (L,P,S, and M) mounted on a central rod.

It is found in the periplasm. It localises to the bacterial flagellum basal body. Functionally, assembles around the rod to form the L-ring and probably protects the motor/basal body from shearing forces during rotation. This chain is Flagellar P-ring protein 2, found in Chromobacterium violaceum (strain ATCC 12472 / DSM 30191 / JCM 1249 / CCUG 213 / NBRC 12614 / NCIMB 9131 / NCTC 9757 / MK).